Here is a 384-residue protein sequence, read N- to C-terminus: O-phospho-L-seryl-tRNA:Cys-tRNA synthase 1 (384 aa).

Residues 88-89 (AR), N195, and 218-220 (SGH) each bind pyridoxal 5'-phosphate. K221 is modified (N6-(pyridoxal phosphate)lysine).

Belongs to the SepCysS family. As to quaternary structure, homodimer. Interacts with SepRS. Pyridoxal 5'-phosphate is required as a cofactor.

It catalyses the reaction O-phospho-L-seryl-tRNA(Cys) + hydrogen sulfide + H(+) = L-cysteinyl-tRNA(Cys) + phosphate. Functionally, converts O-phospho-L-seryl-tRNA(Cys) (Sep-tRNA(Cys)) to L-cysteinyl-tRNA(Cys) (Cys-tRNA(Cys)). This Methanocella arvoryzae (strain DSM 22066 / NBRC 105507 / MRE50) protein is O-phospho-L-seryl-tRNA:Cys-tRNA synthase 1.